A 473-amino-acid chain; its full sequence is MTEAKNISDDTDVLSLTTNSLRTSKTLFGAEFGSVTSFDDTVAQNLKRTYKEHLEYGSVLGGTVGKRKNRHYEEDTIGSNALTVRADSENPSSQVITKFSDPNKKIAGQVSMQSLEKIKGVPEAAHRIAGESQASLVKRTLAEQIRPEWHAPWTLMRVISGHLGWVRCVDVEPGNQWFCTGAGDRTIKIWDLASGVLKLTLTGHIATVRGLAVSPRHPYLFSCGEDKMVKCWDLETNKVIRHYHGHLSGVYALKLHPTLDVLVTAGRDAVARVWDMRTRQNVHVLSGHKSTVASLAVQEFDPQVVTGSMDSTIRLWDLAAGKTLTTLTHHKKTVRALSLHPDEFTFASGSSDNIKHWKFPEGAFMGNFEGHNAIVNTLSINSDNVMFSGADNGSMCFWDWKSGHKYQELQSVVQPGSLDSEAGIFASSFDKTGLRLITCEADKSVKIYKQVDNATPETHPNLPWTPSNLRRRY.

WD repeat units lie at residues 161 to 191 (GHLG…KIWD), 203 to 233 (GHIA…KCWD), 245 to 275 (GHLS…RVWD), 287 to 317 (GHKS…RLWD), 329 to 358 (HHKK…KHWK), 370 to 399 (GHNA…CFWD), and 419 to 449 (DSEA…KIYK).

The protein belongs to the WD repeat PRL1/PRL2 family. Belongs to the 40S cdc5-associated complex (or cwf complex), a spliceosome sub-complex reminiscent of a late-stage spliceosome composed of the U2, U5 and U6 snRNAs and at least brr2, cdc5, cwf2/prp3, cwf3/syf1, cwf4/syf3, cwf5/ecm2, spp42/cwf6, cwf7/spf27, cwf8, cwf9, cwf10, cwf11, cwf12, prp45/cwf13, cwf14, cwf15, cwf16, cwf17, cwf18, cwf19, cwf20, cwf21, cwf22, cwf23, cwf24, cwf25, cwf26, cyp7/cwf27, cwf28, cwf29/ist3, lea1, msl1, prp5/cwf1, prp10, prp12/sap130, prp17, prp22, sap61, sap62, sap114, sap145, slu7, smb1, smd1, smd3, smf1, smg1 and syf2.

The protein localises to the nucleus. Functionally, required for both cell cycle progression at G2/M and pre-mRNA splicing. Interacts genetically with the PRP4 kinase. The sequence is that of Pre-mRNA-splicing factor prp5 (prp5) from Schizosaccharomyces pombe (strain 972 / ATCC 24843) (Fission yeast).